Reading from the N-terminus, the 566-residue chain is Bifunctional NADP phosphatase/NAD kinase (566 aa).

The segment at 1 to 283 (MDMLEMALNI…KLVGIFGNRW (283 aa)) is NADP phosphatase. Mg(2+)-binding residues include E66, D85, V87, D88, and D229. An NAD kinase region spans residues 275–566 (LVGIFGNRWR…YNKLKKLSLM (292 aa)). The active-site Proton acceptor is the D355. Residues 355–356 (DG), R360, 430–431 (NE), K441, R458, D460, 471–476 (TAYSLS), and N528 each bind NAD(+).

The protein in the N-terminal section; belongs to the inositol monophosphatase superfamily. It in the C-terminal section; belongs to the NAD kinase family. In terms of assembly, homotetramer. Requires Mg(2+) as cofactor.

The protein resides in the cytoplasm. It catalyses the reaction NAD(+) + ATP = ADP + NADP(+) + H(+). It carries out the reaction NADP(+) + H2O = phosphate + NAD(+). In terms of biological role, involved in the regulation of the intracellular balance between NAD(H) and NADP(H), and is a key enzyme in the biosynthesis of NADP. Catalyzes the phosphorylation and dephosphorylation of NAD and NADP, respectively. Although it shows conflicting dual activities and is able to supply NADP, it seems that its physiological role is to prevent excess accumulation of NADP. This is Bifunctional NADP phosphatase/NAD kinase from Methanococcus maripaludis (strain DSM 14266 / JCM 13030 / NBRC 101832 / S2 / LL).